We begin with the raw amino-acid sequence, 975 residues long: Nesprin-3 (975 aa).

Residues 1–925 lie on the Cytoplasmic side of the membrane; it reads MTQQPQEDFE…PCSLLQKACR (925 aa). 2 Spectrin repeats span residues 220–325 and 647–740; these read QDHE…RLRG and REHC…QALR. The tract at residues 778–798 is disordered; the sequence is LINPQDPIPRRQHGANPLEGH. A KASH domain is found at 917–975; sequence CSLLQKACRVALPLQLLLLLFLLLLFLLPAGEEERSCALANNFARSFALMLRYNGPPPT. A helical; Anchor for type IV membrane protein transmembrane segment spans residues 926-946; sequence VALPLQLLLLLFLLLLFLLPA. Over 947 to 975 the chain is Perinuclear space; it reads GEEERSCALANNFARSFALMLRYNGPPPT.

This sequence belongs to the nesprin family. In terms of assembly, core component of LINC complexes which are composed of inner nuclear membrane SUN domain-containing proteins coupled to outer nuclear membrane KASH domain-containing nesprins. SUN and KASH domain-containing proteins seem to bind each other promiscuously; however, differentially expression of LINC complex constituents can give rise to specific assemblies. Interacts with SUN1 and SUN2; probably forming respective LINC complexes. Interacts with PLEC (via actin-binding domain). Interacts with DST. Interacts with SYNE1. Interacts (via KASH domain) with TOR1A (ATP-bound); the interaction is required for SYNE3 nuclear envelope localization. The disulfid bond with SUN1 or SUN2 is required for stability of the respective LINC complex under tensile forces. Ubiquitous.

It is found in the nucleus outer membrane. The protein localises to the nucleus envelope. It localises to the rough endoplasmic reticulum. In terms of biological role, as a component of the LINC (LInker of Nucleoskeleton and Cytoskeleton) complex involved in the connection between the nuclear lamina and the cytoskeleton. The nucleocytoplasmic interactions established by the LINC complex play an important role in the transmission of mechanical forces across the nuclear envelope and in nuclear movement and positioning. Probable anchoring protein which tethers the nucleus to the cytoskeleton by binding PLEC which can associate with the intermediate filament system. Plays a role in the regulation of aortic epithelial cell morphology, and is required for flow-induced centrosome polarization and directional migration in aortic endothelial cells. In Mus musculus (Mouse), this protein is Nesprin-3 (Syne3).